The sequence spans 634 residues: Threonine--tRNA ligase (634 aa).

The TGS domain maps to 1–61 (MINIRFPDGS…NSNCELRLIT (61 aa)). Residues 241 to 532 (DHRKIGKVLD…LIEHYAGNLP (292 aa)) form a catalytic region. Positions 332, 383, and 509 each coordinate Zn(2+).

The protein belongs to the class-II aminoacyl-tRNA synthetase family. As to quaternary structure, homodimer. Requires Zn(2+) as cofactor.

The protein localises to the cytoplasm. The catalysed reaction is tRNA(Thr) + L-threonine + ATP = L-threonyl-tRNA(Thr) + AMP + diphosphate + H(+). Its function is as follows. Catalyzes the attachment of threonine to tRNA(Thr) in a two-step reaction: L-threonine is first activated by ATP to form Thr-AMP and then transferred to the acceptor end of tRNA(Thr). Also edits incorrectly charged L-seryl-tRNA(Thr). The polypeptide is Threonine--tRNA ligase (Francisella tularensis subsp. tularensis (strain WY96-3418)).